A 124-amino-acid polypeptide reads, in one-letter code: Urease subunit beta (124 aa).

This sequence belongs to the urease beta subunit family. In terms of assembly, heterotrimer of UreA (gamma), UreB (beta) and UreC (alpha) subunits. Three heterotrimers associate to form the active enzyme.

The protein resides in the cytoplasm. It carries out the reaction urea + 2 H2O + H(+) = hydrogencarbonate + 2 NH4(+). The protein operates within nitrogen metabolism; urea degradation; CO(2) and NH(3) from urea (urease route): step 1/1. In Bacillus subtilis (strain 168), this protein is Urease subunit beta.